A 552-amino-acid chain; its full sequence is MVSKIDGKLFAEMIIQGAQNLSNHADLVDSLNVYPVPDGDTGTNMNLTMTSGREAVENNLSQQIGELGKTFSKGLLMGARGNSGVILSQLFRGFSKSLETYETINAKQFAESFKAGVDTAYKAIMKPVEGTILTVARDAADAAIQKAEETDDCIELMAYILEEAEVSLENTPNLLPVLKEVGVVDSGGKGLAIVYAGFLKALKGETISAQSPKLNKESLVNEEHDFHGVINTEDIVYGYCTEMMVRFGKNKKTFDEQNFREDMSQFGDSLLVINDEEIVKVHVHTEKPGDVFNYGQQYGELIKLKVENMREQHREVVKKEHDGGKAISTEETQAVDTAVIAISMGEGISEIFKSMGATHMISGGQTMNPSTEDIVKIIEQSQCKRAIILPNNKNILMASEQAAEIVEADTIVIPTKSIPQGIAALFNYDETDSLESNKSRMVESLEAVRSGSVTYAVRDTKIDGVEIKKDAFMGLIEDKIVTSHADQFETVKGLMAEMINEDSEIITMIVGMDADKTVTSDIEDWMEATYPDVELEQHDGQQPVYQYLFSVE.

The DhaL domain occupies 8–200 (KLFAEMIIQG…LAIVYAGFLK (193 aa)).

This is an uncharacterized protein from Staphylococcus saprophyticus subsp. saprophyticus (strain ATCC 15305 / DSM 20229 / NCIMB 8711 / NCTC 7292 / S-41).